The sequence spans 453 residues: Signal transduction histidine-protein kinase ArlS (453 aa).

The next 2 helical transmembrane spans lie at 14-34 and 157-177; these read ITTL…IFFL and FVAI…SYIF. Residues 179–232 enclose the HAMP domain; that stretch reads TQLTKPLVTMSNKMIQIRRDGFQNKLELKTNYEETDNLIDTFNDMMYQIEESFN. In terms of domain architecture, Histidine kinase spans 240 to 453; it reads DASHELRTPL…QYTTFKIIFK (214 aa). Position 243 is a phosphohistidine; by autocatalysis (H243).

In terms of processing, autophosphorylated.

The protein resides in the cell membrane. The catalysed reaction is ATP + protein L-histidine = ADP + protein N-phospho-L-histidine.. Its function is as follows. Member of the two-component regulatory system ArlS/ArlR. ArlS probably functions as a sensor protein kinase which is autophosphorylated at a histidine residue and transfers its phosphate group to ArlR. The chain is Signal transduction histidine-protein kinase ArlS (arlS) from Staphylococcus haemolyticus (strain JCSC1435).